Consider the following 1294-residue polypeptide: Voltage-gated inwardly rectifying potassium channel KCNH2 (1294 aa).

Topologically, residues 1-377 (RKFIIANARV…RIHRWTILHY (377 aa)) are cytoplasmic. The 30-residue stretch at 15–44 (VIYCNDGFCELCGYSRAEVMQRPCTCDFLH) folds into the PAS domain. Positions 66–118 (RKVEIAFYRKDGSCFLCLVDVVPVKNEDGAVIMFILNFEVVMEKDMVGSPARD) constitute a PAC domain. The segment at 207–258 (LVAPGSPPSSVPGPPHTSPRAHSLNPDASGSSCSLARTRSRESCASVRRASS) is disordered. Positions 211-223 (GSPPSSVPGPPHT) are enriched in pro residues. 2 positions are modified to phosphoserine: Ser-212 and Ser-216. Polar residues predominate over residues 232-243 (PDASGSSCSLAR). A phosphoserine mark is found at Ser-257, Ser-258, Ser-294, and Ser-325. The chain crosses the membrane as a helical span at residues 378-398 (SPFKAVWDWLILLLVIYTAVF). Over 399–424 (TPYSAAFLLKEPEEDAQTADCGYACQ) the chain is Extracellular. A helical membrane pass occupies residues 425 to 445 (PLAVVDLIVDIMFIVDILINF). Topologically, residues 446-469 (RTTYVNANEEVVSHPGRIAVHYFK) are cytoplasmic. The helical transmembrane segment at 470–490 (GWFLIDMVAAIPFDLLIFGSG) threads the bilayer. Residues 491–494 (SEEL) are Extracellular-facing. A helical; Voltage-sensor transmembrane segment spans residues 495–515 (IGLLKTARLLRLVRVARKLDR). At 516-521 (YSEYGA) the chain is on the cytoplasmic side. The helical transmembrane segment at 522–542 (AVLFLLMCTFALIAHWLACIW) threads the bilayer. Residues 543–585 (YAIGNMEQPDMNSRIGWLHNLGDQIGKPYNSSGLGGPSIKDKY) lie on the Extracellular side of the membrane. The pore-forming intramembrane region spans 586-606 (VTALYFTFSSLTSVGFGNVSP). The short motif at 598–603 (SVGFGN) is the Selectivity filter element. At 607–612 (NTNSEK) the chain is on the extracellular side. A helical transmembrane segment spans residues 613 to 633 (IFSICVMLIGSLMYASIFGNV). Over 634–1294 (SAIIQRLYSG…IAHWLACIWY (661 aa)) the chain is Cytoplasmic. Residues 716 to 816 (PFRGATKGCL…IHRDDLLEVL (101 aa)) form a cNMP-binding domain region. The segment at 844-956 (GSPGSTELEG…LTEDGDKSDT (113 aa)) is disordered. Residues Ser-845 and Ser-848 each carry the phosphoserine modification. The segment covering 857 to 866 (RQRRRKLSFR) has biased composition (basic residues). A compositionally biased stretch (low complexity) spans 902–913 (GDSPSSGPSSPE). Omega-N-methylarginine is present on Arg-987. The stretch at 1008 to 1035 (RGDVESRLDALQRQLNRLETRLSADMAT) forms a coiled coil. Ser-1110 carries the phosphoserine modification.

It belongs to the potassium channel family. H (Eag) (TC 1.A.1.20) subfamily. Kv11.1/KCNH2 sub-subfamily. In terms of assembly, the potassium channel is probably composed of a homo- or heterotetrameric complex of pore-forming alpha subunits that can associate with modulating beta subunits. Interacts with DNAJB12 and DNAJB14; chaperones DNAJB12 and DNAJB14 promote tetramerization. Heteromultimer with KCNH6/ERG2 and KCNH7/ERG3. Interacts with ALG10B. Forms a stable complex with KCNE1 or KCNE2, and that this heteromultimerization regulates Inward rectifier potassium channel activity. Interacts with CANX. The core-glycosylated, but not the fully glycosylated form interacts with RNF207. Interacts with NDFIP1 and NDFIP2; this interaction decreases the cell membrane expression by targeting KCNH2, through interaction with NEDD4L, for the degradation through the multivesicular bodies (MVBs)-lysosomal pathway. Phosphorylated on serine and threonine residues. Phosphorylation by PKA inhibits ion conduction. Highly expressed in heart and brain.

Its subcellular location is the cell membrane. It catalyses the reaction K(+)(in) = K(+)(out). In terms of biological role, pore-forming (alpha) subunit of voltage-gated inwardly rectifying potassium channel. Characterized by unusual gating kinetics by producing relatively small outward currents during membrane depolarization and large inward currents during subsequent repolarization which reflect a rapid inactivation during depolarization and quick recovery from inactivation but slow deactivation (closing) during repolarization. Channel properties are modulated by cAMP and subunit assembly. Forms a stable complex with KCNE1 or KCNE2, and that this heteromultimerization regulates inward rectifier potassium channel activity. This Cavia porcellus (Guinea pig) protein is Voltage-gated inwardly rectifying potassium channel KCNH2.